We begin with the raw amino-acid sequence, 272 residues long: Putative pyruvate, phosphate dikinase regulatory protein 2 (272 aa).

154 to 161 serves as a coordination point for ADP; it reads GVSRTSKT.

This sequence belongs to the pyruvate, phosphate/water dikinase regulatory protein family. PDRP subfamily.

The enzyme catalyses N(tele)-phospho-L-histidyl/L-threonyl-[pyruvate, phosphate dikinase] + ADP = N(tele)-phospho-L-histidyl/O-phospho-L-threonyl-[pyruvate, phosphate dikinase] + AMP + H(+). The catalysed reaction is N(tele)-phospho-L-histidyl/O-phospho-L-threonyl-[pyruvate, phosphate dikinase] + phosphate + H(+) = N(tele)-phospho-L-histidyl/L-threonyl-[pyruvate, phosphate dikinase] + diphosphate. Bifunctional serine/threonine kinase and phosphorylase involved in the regulation of the pyruvate, phosphate dikinase (PPDK) by catalyzing its phosphorylation/dephosphorylation. In Staphylococcus epidermidis (strain ATCC 35984 / DSM 28319 / BCRC 17069 / CCUG 31568 / BM 3577 / RP62A), this protein is Putative pyruvate, phosphate dikinase regulatory protein 2.